The sequence spans 187 residues: Potassium-transporting ATPase KdpC subunit (187 aa).

Residues 11–31 (LILLMTVVTGALYPLAVTGIA) traverse the membrane as a helical segment.

Belongs to the KdpC family. The system is composed of three essential subunits: KdpA, KdpB and KdpC.

The protein localises to the cell inner membrane. Functionally, part of the high-affinity ATP-driven potassium transport (or Kdp) system, which catalyzes the hydrolysis of ATP coupled with the electrogenic transport of potassium into the cytoplasm. This subunit acts as a catalytic chaperone that increases the ATP-binding affinity of the ATP-hydrolyzing subunit KdpB by the formation of a transient KdpB/KdpC/ATP ternary complex. The protein is Potassium-transporting ATPase KdpC subunit of Pseudomonas entomophila (strain L48).